The sequence spans 303 residues: Aquaporin NIP1-2 (303 aa).

Positions M1–C39 are disordered. The segment covering Q17–S26 has biased composition (basic and acidic residues). 2 consecutive transmembrane segments (helical) span residues I66 to V86 and G91 to V111. The NPA 1 signature appears at N123–A125. Helical transmembrane passes span V145–G165, A188–T208, and A212–A232. The NPA 2 signature appears at N241–A243. A helical membrane pass occupies residues Y255–A275.

Belongs to the MIP/aquaporin (TC 1.A.8) family. NIP (TC 1.A.8.12) subfamily. In terms of tissue distribution, expressed in roots and leaves, and at lower levels in anthers.

Its subcellular location is the membrane. Aquaporins facilitate the transport of water and small neutral solutes across cell membranes. The polypeptide is Aquaporin NIP1-2 (NIP1-2) (Oryza sativa subsp. japonica (Rice)).